We begin with the raw amino-acid sequence, 414 residues long: MIIMLSEYLEEFKEYLERFKNIDINFSDVLKMSKKFIIWRLKQIFGDSSTIFTNISSEITIFDKIFQMIDYDIDGEVEKRLPKDESRFMIGVRREKEIEIKKEIITNLLDFLLIILLSHTPYFNAFVRKYAEIKKIKVIKKLPNKISVWEFIKIASRSRINDLHLERLDLENGFVDITKIKEIFAKEIIRVELMKLGENIKKRKLPDDSVVKELLNEISDYLKDKVKYEQISGIKALNYKGNIPLEWHPPCIRGILNDILSGGSPSHYARRSFVVYWFCAKFNPNLRPLDKNGNLVNVSATDIASEEEIERFIDELIEMLFKNVEDFDEKKTRYYIMHNIGYKVGHGRLTHCEYCKNWQDDGGKGLSYYCKPDELCKKKFIIHPLDYLCYNINKHLKKERFKKIKKEDKNGDNK.

The [4Fe-4S] cluster site is built by Cys-251, Cys-352, Cys-370, and Cys-376.

It belongs to the eukaryotic-type primase large subunit family. As to quaternary structure, heterodimer of a small subunit (PriS) and a large subunit (PriL). It depends on [4Fe-4S] cluster as a cofactor.

Functionally, regulatory subunit of DNA primase, an RNA polymerase that catalyzes the synthesis of short RNA molecules used as primers for DNA polymerase during DNA replication. Stabilizes and modulates the activity of the small subunit, increasing the rate of DNA synthesis, and conferring RNA synthesis capability. The DNA polymerase activity may enable DNA primase to also catalyze primer extension after primer synthesis. May also play a role in DNA repair. The polypeptide is DNA primase large subunit PriL (Methanocaldococcus jannaschii (strain ATCC 43067 / DSM 2661 / JAL-1 / JCM 10045 / NBRC 100440) (Methanococcus jannaschii)).